Reading from the N-terminus, the 173-residue chain is Lithostathine-2 (173 aa).

The signal sequence occupies residues 1–22 (MAQNNVYLILFLCLMFLSYSQG). A C-type lectin domain is found at 41 to 171 (INCPEGANAY…EAQYSFVCKF (131 aa)). 3 disulfide bridges follow: C43/C54, C71/C169, and C144/C161.

In terms of tissue distribution, expressed only in regenerating islets and normal exocrine pancreas, but not in normal pancreatic islets. Expressed strongly in pancreas, weakly in liver, but not at all in gall bladder.

Its subcellular location is the secreted. Its function is as follows. Might act as an inhibitor of spontaneous calcium carbonate precipitation. The chain is Lithostathine-2 (Reg2) from Mus musculus (Mouse).